Reading from the N-terminus, the 733-residue chain is Folic acid synthesis protein fol1 (733 aa).

DHNA stretches follow at residues 55–167 and 179–277; these read VVVE…YAER and IEFS…QIYR. Residue tyrosine 281 is modified to Phosphotyrosine. The interval 295-454 is HPK; it reads NKIAYLSFGS…LPSQGIRLYS (160 aa). Residues 465–724 enclose the Pterin-binding domain; that stretch reads ALTMGILNVT…DTKEMSKVVG (260 aa). The tract at residues 467 to 733 is DHPS; that stretch reads TMGILNVTPD…GMANAIRYVP (267 aa). A Mg(2+)-binding site is contributed by asparagine 472. Residues threonine 511, aspartate 546, asparagine 565, aspartate 637, lysine 677, and 712–714 each bind (7,8-dihydropterin-6-yl)methyl diphosphate; that span reads RVH.

This sequence in the N-terminal section; belongs to the DHNA family. The protein in the central section; belongs to the HPPK family. It in the C-terminal section; belongs to the DHPS family. Requires Mg(2+) as cofactor.

The protein localises to the cytoplasm. It carries out the reaction 7,8-dihydroneopterin = 6-hydroxymethyl-7,8-dihydropterin + glycolaldehyde. The catalysed reaction is 6-hydroxymethyl-7,8-dihydropterin + ATP = (7,8-dihydropterin-6-yl)methyl diphosphate + AMP + H(+). It catalyses the reaction (7,8-dihydropterin-6-yl)methyl diphosphate + 4-aminobenzoate = 7,8-dihydropteroate + diphosphate. The protein operates within cofactor biosynthesis; tetrahydrofolate biosynthesis; 2-amino-4-hydroxy-6-hydroxymethyl-7,8-dihydropteridine diphosphate from 7,8-dihydroneopterin triphosphate: step 3/4. It functions in the pathway cofactor biosynthesis; tetrahydrofolate biosynthesis; 2-amino-4-hydroxy-6-hydroxymethyl-7,8-dihydropteridine diphosphate from 7,8-dihydroneopterin triphosphate: step 4/4. It participates in cofactor biosynthesis; tetrahydrofolate biosynthesis; 7,8-dihydrofolate from 2-amino-4-hydroxy-6-hydroxymethyl-7,8-dihydropteridine diphosphate and 4-aminobenzoate: step 1/2. Functionally, catalyzes three sequential steps of tetrahydrofolate biosynthesis. The chain is Folic acid synthesis protein fol1 (fol1) from Schizosaccharomyces pombe (strain 972 / ATCC 24843) (Fission yeast).